A 456-amino-acid chain; its full sequence is UPF0496 protein 4 (456 aa).

A helical transmembrane segment spans residues 205–221; sequence SVTVFVCSIFVAVLSGS.

The protein belongs to the ROH1 family.

It is found in the membrane. The sequence is that of UPF0496 protein 4 from Oryza sativa subsp. indica (Rice).